Here is a 308-residue protein sequence, read N- to C-terminus: Elongation factor Ts (308 aa).

The interval 79–82 (TDFV) is involved in Mg(2+) ion dislocation from EF-Tu.

The protein belongs to the EF-Ts family.

It localises to the cytoplasm. Its function is as follows. Associates with the EF-Tu.GDP complex and induces the exchange of GDP to GTP. It remains bound to the aminoacyl-tRNA.EF-Tu.GTP complex up to the GTP hydrolysis stage on the ribosome. In Bdellovibrio bacteriovorus (strain ATCC 15356 / DSM 50701 / NCIMB 9529 / HD100), this protein is Elongation factor Ts.